Consider the following 122-residue polypeptide: MARIAGINIPVRKCVPFALTYIYGIGIATANVICHACEVDKRKRVSELRDEDIEKISGFIRQNYVIEGELRKEVAMNIKSLVEMGCYRGVRHRKGLPVRGQRTHTNAKTRKGRSRLPIAGKK.

The interval 97–122 (PVRGQRTHTNAKTRKGRSRLPIAGKK) is disordered.

This sequence belongs to the universal ribosomal protein uS13 family. In terms of assembly, part of the 30S ribosomal subunit. Forms a loose heterodimer with protein S19. Forms two bridges to the 50S subunit in the 70S ribosome.

Functionally, located at the top of the head of the 30S subunit, it contacts several helices of the 16S rRNA. In the 70S ribosome it contacts the 23S rRNA (bridge B1a) and protein L5 of the 50S subunit (bridge B1b), connecting the 2 subunits; these bridges are implicated in subunit movement. Contacts the tRNAs in the A and P-sites. This is Small ribosomal subunit protein uS13 from Wolbachia pipientis wMel.